Consider the following 94-residue polypeptide: Small ribosomal subunit protein bS20c (94 aa).

It belongs to the bacterial ribosomal protein bS20 family.

It localises to the plastid. Its subcellular location is the chloroplast. Functionally, binds directly to 16S ribosomal RNA. This Porphyra purpurea (Red seaweed) protein is Small ribosomal subunit protein bS20c.